Reading from the N-terminus, the 299-residue chain is tRNA dimethylallyltransferase (299 aa).

ATP is bound at residue 13 to 20 (GPTASGKT). 15–20 (TASGKT) contributes to the substrate binding site. The interval 38–41 (DSRQ) is interaction with substrate tRNA.

Belongs to the IPP transferase family. In terms of assembly, monomer. The cofactor is Mg(2+).

It carries out the reaction adenosine(37) in tRNA + dimethylallyl diphosphate = N(6)-dimethylallyladenosine(37) in tRNA + diphosphate. Catalyzes the transfer of a dimethylallyl group onto the adenine at position 37 in tRNAs that read codons beginning with uridine, leading to the formation of N6-(dimethylallyl)adenosine (i(6)A). This Prochlorococcus marinus (strain MIT 9313) protein is tRNA dimethylallyltransferase.